Reading from the N-terminus, the 54-residue chain is uncharacterized protein (54 aa).

The protein to B.subtilis XkdX.

This is an uncharacterized protein from Bacillus subtilis (strain 168).